The chain runs to 265 residues: Aquaporin-5 (265 aa).

Over 1–12 the chain is Cytoplasmic; it reads MKKEVCSVAFFK. The chain crosses the membrane as a helical span at residues 13–33; the sequence is AVFAEFLATLIFVFFGLGSAL. At 34–39 the chain is on the extracellular side; it reads KWPSAL. The chain crosses the membrane as a helical span at residues 40–60; that stretch reads PTILQISIAFGLAIGTLAQAL. The Cytoplasmic portion of the chain corresponds to 61–65; the sequence is GPVSG. Residues 66–74 constitute an intramembrane region (discontinuously helical); sequence GHINPAITL. The NPA 1 signature appears at 69–71; it reads NPA. Residues 75 to 87 lie on the Cytoplasmic side of the membrane; that stretch reads ALLIGNQISLLRA. Residues 88 to 108 form a helical membrane-spanning segment; that stretch reads IFYVAAQLVGAIAGAGILYWL. At 109–126 the chain is on the extracellular side; it reads APGNARGNLAVNALSNNT. N-linked (GlcNAc...) asparagine glycosylation is present at N124. A helical transmembrane segment spans residues 127 to 147; it reads TPGKAVVVELILTFQLALCIF. Residues 148 to 158 lie on the Cytoplasmic side of the membrane; the sequence is SSTDSRRTSPV. A helical membrane pass occupies residues 159–179; the sequence is GSPALSIGLSVTLGHLVGIYF. A topological domain (extracellular) is located at residue T180. The segment at residues 181-191 is an intramembrane region (discontinuously helical); it reads GCSMNPARSFG. The NPA 2 motif lies at 185 to 187; it reads NPA. Residues 192-203 lie on the Extracellular side of the membrane; that stretch reads PAVVMNRFSPSH. A helical transmembrane segment spans residues 204–224; sequence WVFWVGPIVGAVLAAILYFYL. Residues 225–265 are Cytoplasmic-facing; the sequence is LFPSSLSLHDRVAVVKGTYEPEEDWEDHREERKKTIELTAH.

This sequence belongs to the MIP/aquaporin (TC 1.A.8) family. In terms of assembly, homotetramer; each monomer provides an independent water pore. Interacts with TRPV4; the interaction is probably indirect and regulates TRPV4 activation by hypotonicity. Detected at the luminal membrane of secretory epithelial cells in hindpaw sweat glands. Detected in acinar cells in salivary glands, in duct cells in lacrimal glands and in lung (at protein level). Detected in lung, parotid, submandibular, sublingual, and lacrimal gland tissues.

Its subcellular location is the apical cell membrane. It is found in the cell membrane. The protein localises to the cytoplasmic vesicle membrane. It catalyses the reaction H2O(in) = H2O(out). Its function is as follows. Aquaporins form homotetrameric transmembrane channels, with each monomer independently mediating water transport across the plasma membrane along its osmotic gradient. Plays an important role in fluid secretion in salivary glands. Required for TRPV4 activation by hypotonicity. Together with TRPV4, controls regulatory volume decrease in salivary epithelial cells. Seems to play a redundant role in water transport in the eye, lung and in sweat glands. In Mus musculus (Mouse), this protein is Aquaporin-5.